The chain runs to 392 residues: Chalcone synthase 1 (392 aa).

Cys167 is a catalytic residue.

Belongs to the thiolase-like superfamily. Chalcone/stilbene synthases family.

It carries out the reaction (E)-4-coumaroyl-CoA + 3 malonyl-CoA + 3 H(+) = 2',4,4',6'-tetrahydroxychalcone + 3 CO2 + 4 CoA. Its pathway is secondary metabolite biosynthesis; flavonoid biosynthesis. Functionally, the primary product of this enzyme is 4,2',4',6'-tetrahydroxychalcone (also termed naringenin-chalcone or chalcone) which can under specific conditions spontaneously isomerize into naringenin. This chain is Chalcone synthase 1 (CHS1), found in Secale cereale (Rye).